The sequence spans 292 residues: 11-beta-hydroxysteroid dehydrogenase 1 (292 aa).

The chain crosses the membrane as a helical span at residues 7 to 24; that stretch reads YLLPILGIFLAYYYYSAN.

Belongs to the short-chain dehydrogenases/reductases (SDR) family. In terms of assembly, homodimer. Expressed highest in liver and ovaries (corpora lutea, granulosa cells, thecal, uterine caruncle and intercarunculer tissues), lower expression in kidney and spleen, and lowest in the adrenal.

The protein resides in the endoplasmic reticulum membrane. The catalysed reaction is an 11beta-hydroxysteroid + NADP(+) = an 11-oxosteroid + NADPH + H(+). It carries out the reaction corticosterone + NADP(+) = 11-dehydrocorticosterone + NADPH + H(+). The enzyme catalyses cortisone + NADPH + H(+) = cortisol + NADP(+). It catalyses the reaction a 7beta-hydroxysteroid + NADP(+) = a 7-oxosteroid + NADPH + H(+). The catalysed reaction is 7-oxocholesterol + NADPH + H(+) = 7beta-hydroxycholesterol + NADP(+). It carries out the reaction chenodeoxycholate + NADP(+) = 7-oxolithocholate + NADPH + H(+). The enzyme catalyses 7-oxolithocholate + NADPH + H(+) = ursodeoxycholate + NADP(+). It catalyses the reaction glycochenodeoxycholate + NADP(+) = 7-oxoglycolithocholate + NADPH + H(+). The catalysed reaction is taurochenodeoxycholate + NADP(+) = 7-oxotaurolithocholate + NADPH + H(+). It carries out the reaction tauroursodeoxycholate + NADP(+) = 7-oxotaurolithocholate + NADPH + H(+). The enzyme catalyses glycoursodeoxycholate + NADP(+) = 7-oxoglycolithocholate + NADPH + H(+). It catalyses the reaction 7-oxopregnenolone + NADPH + H(+) = 7beta-hydroxypregnenolone + NADP(+). The catalysed reaction is 3beta,7alpha-dihydroxyandrost-5-en-17-one + NADP(+) = 3beta-hydroxy-5-androstene-7,17-dione + NADPH + H(+). It carries out the reaction 3beta-hydroxy-5-androstene-7,17-dione + NADPH + H(+) = 3beta,7beta-dihydroxyandrost-5-en-17-one + NADP(+). The enzyme catalyses 3beta-hydroxy-5alpha-androstane-7,17-dione + NADPH + H(+) = 3beta,7beta-dihydroxy-5alpha-androstan-17-one + NADP(+). In terms of biological role, controls the reversible conversion of biologically active glucocorticoids such as cortisone to cortisol, and 11-dehydrocorticosterone to corticosterone in the presence of NADP(H). Participates in the corticosteroid receptor-mediated anti-inflammatory response, as well as metabolic and homeostatic processes. Plays a role in the secretion of aqueous humor in the eye, maintaining a normotensive, intraocular environment. Bidirectional in vitro, predominantly functions as a reductase in vivo, thereby increasing the concentration of active glucocorticoids. It has broad substrate specificity, besides glucocorticoids, it accepts other steroid and sterol substrates. Interconverts 7-oxo- and 7-hydroxy-neurosteroids such as 7-oxopregnenolone and 7beta-hydroxypregnenolone, 7-oxodehydroepiandrosterone (3beta-hydroxy-5-androstene-7,17-dione) and 7beta-hydroxydehydroepiandrosterone (3beta,7beta-dihydroxyandrost-5-en-17-one), among others. Catalyzes the stereo-specific conversion of the major dietary oxysterol, 7-ketocholesterol (7-oxocholesterol), into the more polar 7-beta-hydroxycholesterol metabolite. 7-oxocholesterol is one of the most important oxysterols, it participates in several events such as induction of apoptosis, accumulation in atherosclerotic lesions, lipid peroxidation, and induction of foam cell formation. Mediates the 7-oxo reduction of 7-oxolithocholate mainly to chenodeoxycholate, and to a lesser extent to ursodeoxycholate, both in its free form and when conjugated to glycine or taurine, providing a link between glucocorticoid activation and bile acid metabolism. Catalyzes the synthesis of 7-beta-25-dihydroxycholesterol from 7-oxo-25-hydroxycholesterol in vitro, which acts as a ligand for the G-protein-coupled receptor (GPCR) Epstein-Barr virus-induced gene 2 (EBI2) and may thereby regulate immune cell migration. In Bos taurus (Bovine), this protein is 11-beta-hydroxysteroid dehydrogenase 1.